The following is a 191-amino-acid chain: Molybdenum cofactor guanylyltransferase (191 aa).

Residues 13–15 (LAG), K26, D72, and D102 each bind GTP. D102 contributes to the Mg(2+) binding site.

The protein belongs to the MobA family. Monomer. It depends on Mg(2+) as a cofactor.

It is found in the cytoplasm. It carries out the reaction Mo-molybdopterin + GTP + H(+) = Mo-molybdopterin guanine dinucleotide + diphosphate. Functionally, transfers a GMP moiety from GTP to Mo-molybdopterin (Mo-MPT) cofactor (Moco or molybdenum cofactor) to form Mo-molybdopterin guanine dinucleotide (Mo-MGD) cofactor. The chain is Molybdenum cofactor guanylyltransferase from Pseudomonas putida (Arthrobacter siderocapsulatus).